The following is a 1228-amino-acid chain: S-layer protein (1228 aa).

The signal sequence occupies residues 1–30 (MDRKKAVKLATASAIAASAFVAANPNASEA).

Its subcellular location is the secreted. The protein localises to the cell wall. The protein resides in the S-layer. The S-layer is a paracrystalline mono-layered assembly of proteins which coat the surface of bacteria. The sequence is that of S-layer protein (sbsA) from Geobacillus stearothermophilus (Bacillus stearothermophilus).